The sequence spans 130 residues: MSMQDPLADMLTRIRNAQMAEKSVVSMPSSTLKVAVANVLQGEGYIAGYQVSGDVKPQLSIELKYFEGRPVIEELKRVSRPGLRQYKSVDQLPKVRGGLGVSIVSTNKGVMTDRAARAAGVGGEVLCTVF.

The protein belongs to the universal ribosomal protein uS8 family. As to quaternary structure, part of the 30S ribosomal subunit. Contacts proteins S5 and S12.

One of the primary rRNA binding proteins, it binds directly to 16S rRNA central domain where it helps coordinate assembly of the platform of the 30S subunit. This chain is Small ribosomal subunit protein uS8, found in Stutzerimonas stutzeri (strain A1501) (Pseudomonas stutzeri).